Consider the following 376-residue polypeptide: UDP-N-acetylenolpyruvoylglucosamine reductase (376 aa).

The 172-residue stretch at 48–219 (VGGPARHLVI…LDVTMQFNLG (172 aa)) folds into the FAD-binding PCMH-type domain. R196 is an active-site residue. S274 (proton donor) is an active-site residue. E368 is an active-site residue.

It belongs to the MurB family. FAD serves as cofactor.

The protein resides in the cytoplasm. It carries out the reaction UDP-N-acetyl-alpha-D-muramate + NADP(+) = UDP-N-acetyl-3-O-(1-carboxyvinyl)-alpha-D-glucosamine + NADPH + H(+). Its pathway is cell wall biogenesis; peptidoglycan biosynthesis. Cell wall formation. The protein is UDP-N-acetylenolpyruvoylglucosamine reductase of Cutibacterium acnes (strain DSM 16379 / KPA171202) (Propionibacterium acnes).